The sequence spans 312 residues: Bifunctional pinoresinol-lariciresinol reductase (312 aa).

NADP(+)-binding positions include 11-17, R36, and K45; that span reads GGTGYIG. Residue K138 is the Proton acceptor of the active site. R142 is an NADP(+) binding site. H270 provides a ligand contact to substrate.

It belongs to the NmrA-type oxidoreductase family. Isoflavone reductase subfamily. In terms of assembly, dimer.

It carries out the reaction (+)-lariciresinol + NADP(+) = (+)-pinoresinol + NADPH + H(+). The catalysed reaction is (-)-secoisolariciresinol + NADP(+) = (+)-lariciresinol + NADPH + H(+). Reductase involved in lignan biosynthesis. Catalyzes the enantioselective sequential conversion of (+)-pinoresinol into (+)-lariciresinol and of (+)-lariciresinol into (-)-secoisolariciresinol. Abstracts the 4R-hydride from the NADPH cofactor during catalysis. In Thuja plicata (Western red-cedar), this protein is Bifunctional pinoresinol-lariciresinol reductase.